We begin with the raw amino-acid sequence, 123 residues long: Large ribosomal subunit protein eL8 (123 aa).

Belongs to the eukaryotic ribosomal protein eL8 family. As to quaternary structure, part of the 50S ribosomal subunit. Probably part of the RNase P complex.

Its subcellular location is the cytoplasm. Its function is as follows. Multifunctional RNA-binding protein that recognizes the K-turn motif in ribosomal RNA, the RNA component of RNase P, box H/ACA, box C/D and box C'/D' sRNAs. The sequence is that of Large ribosomal subunit protein eL8 from Thermococcus kodakarensis (strain ATCC BAA-918 / JCM 12380 / KOD1) (Pyrococcus kodakaraensis (strain KOD1)).